Here is a 326-residue protein sequence, read N- to C-terminus: Tetraacyldisaccharide 4'-kinase (326 aa).

ATP is bound at residue Ser53–Thr60.

The protein belongs to the LpxK family.

It carries out the reaction a lipid A disaccharide + ATP = a lipid IVA + ADP + H(+). The protein operates within glycolipid biosynthesis; lipid IV(A) biosynthesis; lipid IV(A) from (3R)-3-hydroxytetradecanoyl-[acyl-carrier-protein] and UDP-N-acetyl-alpha-D-glucosamine: step 6/6. Its function is as follows. Transfers the gamma-phosphate of ATP to the 4'-position of a tetraacyldisaccharide 1-phosphate intermediate (termed DS-1-P) to form tetraacyldisaccharide 1,4'-bis-phosphate (lipid IVA). The protein is Tetraacyldisaccharide 4'-kinase of Actinobacillus pleuropneumoniae serotype 7 (strain AP76).